Reading from the N-terminus, the 229-residue chain is Large ribosomal subunit protein uL1 (229 aa).

Belongs to the universal ribosomal protein uL1 family. As to quaternary structure, part of the 50S ribosomal subunit.

Its function is as follows. Binds directly to 23S rRNA. The L1 stalk is quite mobile in the ribosome, and is involved in E site tRNA release. Functionally, protein L1 is also a translational repressor protein, it controls the translation of the L11 operon by binding to its mRNA. This chain is Large ribosomal subunit protein uL1, found in Streptococcus uberis (strain ATCC BAA-854 / 0140J).